Reading from the N-terminus, the 631-residue chain is Chaperone protein HtpG (631 aa).

Positions 1 to 339 are a; substrate-binding; the sequence is MSAQKETLGF…SNDLPLNVSR (339 aa). The tract at residues 340-556 is b; sequence EILQESKDID…EHDMSAHLER (217 aa). The tract at residues 557–631 is c; sequence MLKAAGQKIE…INKLMLELSV (75 aa).

It belongs to the heat shock protein 90 family. In terms of assembly, homodimer.

The protein resides in the cytoplasm. Functionally, molecular chaperone. Has ATPase activity. The protein is Chaperone protein HtpG of Chromobacterium violaceum (strain ATCC 12472 / DSM 30191 / JCM 1249 / CCUG 213 / NBRC 12614 / NCIMB 9131 / NCTC 9757 / MK).